The chain runs to 294 residues: Taste receptor type 2 member 143 (294 aa).

The Extracellular portion of the chain corresponds to 1 to 7 (MPSTPTL). A helical membrane pass occupies residues 8–28 (IFIVIFFLVSVASMLQNGFMI). Residues 29-43 (IVLGREWMRNRALPA) lie on the Cytoplasmic side of the membrane. The chain crosses the membrane as a helical span at residues 44–64 (VDMIVASLASSRFCLHGIAIL). The Extracellular portion of the chain corresponds to 65–80 (NNFLASFDFCYQANFV). Residues 81–101 (GILWDFINTLILWLTAWLAIF) form a helical membrane-spanning segment. The Cytoplasmic segment spans residues 102–128 (YCVKISSFSHPVLFWLKWRISQLVPRL). A helical membrane pass occupies residues 129–149 (LLVSLIMGGLSAIISATGNII). Residues 150 to 180 (ANQMIISQGFHGNCTFGHMSLDFYRYYYLSH) are Extracellular-facing. Asparagine 162 carries an N-linked (GlcNAc...) asparagine glycan. The chain crosses the membrane as a helical span at residues 181 to 201 (AVLMWFTPFFLFLVSIIFLMF). The Cytoplasmic segment spans residues 202–227 (SLYRHVEKMRGHRPGPWDPRTQAHTM). Residues 228 to 248 (ALKSLTVFITFYILFFLALII) traverse the membrane as a helical segment. Topologically, residues 249–260 (SSTKSKTMHSYW) are extracellular. The chain crosses the membrane as a helical span at residues 261-281 (YWVREIIIYTGIFLNSIILVL). The Cytoplasmic segment spans residues 282-294 (SNPKLRKALKMRF).

It belongs to the G-protein coupled receptor T2R family.

The protein resides in the membrane. Functionally, putative taste receptor which may play a role in the perception of bitterness. In Rattus norvegicus (Rat), this protein is Taste receptor type 2 member 143.